Consider the following 565-residue polypeptide: MQFTHKKNRSLYIPYAGPVLLEFPLLNKGSAFSMEERSNFNLLGLLPEVVETIEEQAERAWIQYQGFKTEIDKHIYLRNIQDTNETLFYRLIGNHLEEMMPVIYTPTVGAACERFSEIYRRARGVFISYQNRHNLDDILQNVPNHNVKVIVVTDGERILGLGDQGIGGMGIPIGKLSLYTTCGGISPAYTLPIVLDVGTNNQQLLDDPLYMGWRHPRITDDEYYQFVDDVIQAIKARWPDVLLQFEDFAQKNAMPLLNRYRNEICSFNDDIQGTAAVTVGTLIAASRGAGSQLSEQKIVFLGAGSAGCGIAEQIIAQIVREGLSEEEARQRVFMVDRFGLLTDGMPNLLPFQNKLVQKREQLQSWDTTSEALSLLDVVRNVKPNILIGVSGQPGLFTEEIIREMHKHCPRPIVMPLSNPTSRVEATPQNILSWTDGEALVATGSPFSPVTVKGKQYPIAQCNNSYIFPGIGLGVIASGASRVTDEMLMAASETLAQHSPLVNNGEGPVLPELKDIQTVSRAIAFAVGKVAQEQGVAVKTSAEALLQAISDNFWLPEYRNYRRTSI.

Tyr104 acts as the Proton donor in catalysis. Arg157 serves as a coordination point for NAD(+). Lys175 acts as the Proton acceptor in catalysis. A divalent metal cation is bound by residues Glu246, Asp247, and Asp270. 2 residues coordinate NAD(+): Asp270 and Asn418.

This sequence belongs to the malic enzymes family. In terms of assembly, homotetramer. It depends on Mg(2+) as a cofactor. Requires Mn(2+) as cofactor.

The enzyme catalyses (S)-malate + NAD(+) = pyruvate + CO2 + NADH. It carries out the reaction oxaloacetate + H(+) = pyruvate + CO2. The polypeptide is NAD-dependent malic enzyme (Klebsiella pneumoniae subsp. pneumoniae (strain ATCC 700721 / MGH 78578)).